We begin with the raw amino-acid sequence, 58 residues long: Photosystem II reaction center protein K (58 aa).

The propeptide occupies 1-21; that stretch reads MFDLYLKNLLDLSDSGTVVLA. The chain crosses the membrane as a helical span at residues 29-49; it reads IFDPIVDVLPVIPVFFLLLAF.

The protein belongs to the PsbK family. As to quaternary structure, PSII is composed of 1 copy each of membrane proteins PsbA, PsbB, PsbC, PsbD, PsbE, PsbF, PsbH, PsbI, PsbJ, PsbK, PsbL, PsbM, PsbT, PsbX, PsbY, PsbZ, Psb30/Ycf12, at least 3 peripheral proteins of the oxygen-evolving complex and a large number of cofactors. It forms dimeric complexes.

It localises to the plastid. It is found in the chloroplast thylakoid membrane. Functionally, one of the components of the core complex of photosystem II (PSII). PSII is a light-driven water:plastoquinone oxidoreductase that uses light energy to abstract electrons from H(2)O, generating O(2) and a proton gradient subsequently used for ATP formation. It consists of a core antenna complex that captures photons, and an electron transfer chain that converts photonic excitation into a charge separation. The polypeptide is Photosystem II reaction center protein K (Zygnema circumcarinatum (Green alga)).